Consider the following 127-residue polypeptide: Ycf91-like protein (127 aa).

Belongs to the ycf91 family.

This chain is Ycf91-like protein, found in Nostoc sp. (strain PCC 7120 / SAG 25.82 / UTEX 2576).